Reading from the N-terminus, the 387-residue chain is Glucose-1-phosphate adenylyltransferase (387 aa).

Residues tyrosine 99, glycine 164, 179-180 (EK), and serine 190 each bind alpha-D-glucose 1-phosphate.

This sequence belongs to the bacterial/plant glucose-1-phosphate adenylyltransferase family. In terms of assembly, homotetramer.

The enzyme catalyses alpha-D-glucose 1-phosphate + ATP + H(+) = ADP-alpha-D-glucose + diphosphate. It participates in glycan biosynthesis; glycogen biosynthesis. In terms of biological role, involved in the biosynthesis of ADP-glucose, a building block required for the elongation reactions to produce glycogen. Catalyzes the reaction between ATP and alpha-D-glucose 1-phosphate (G1P) to produce pyrophosphate and ADP-Glc. The chain is Glucose-1-phosphate adenylyltransferase from Geobacillus stearothermophilus (Bacillus stearothermophilus).